The primary structure comprises 1833 residues: Protein TIC 214 (1833 aa).

Transmembrane regions (helical) follow at residues I18–G38, F67–L87, P90–H110, L127–L147, V175–I195, and I218–I238. The segment at E254–K301 is disordered. Composition is skewed to basic and acidic residues over residues E259–E273 and D292–K301.

This sequence belongs to the TIC214 family. Part of the Tic complex.

It localises to the plastid. It is found in the chloroplast inner membrane. Involved in protein precursor import into chloroplasts. May be part of an intermediate translocation complex acting as a protein-conducting channel at the inner envelope. The polypeptide is Protein TIC 214 (Spinacia oleracea (Spinach)).